The chain runs to 403 residues: MATGGGAEEERKRGRPQLLPPARPAARGEEADGGREKMGWAQVVKNLAEKKGEFREPRPPRREEESGGGGGSAGLGGPAGLAAPDLGDFPPAGRGDPKGRRRDPAGEAVDPRKKKGAAEAGRRKKAEAAAAAMATPARPGEAEDAAERPLQDEPAAAAGPGKGRFLVRICFQGDEGACPTRDFVVGALILRSIGMDPSDIYAVIQIPGSREFDVSFRSAEKLALFLRVYEEKREQEDCWENFVVLGRSKSSLKTLFILFRNETVDVEDIVTWLKRHCDVLAVPVKVTDRFGIWTGEYKCEIELRQGEGGVRHLPGAFFLGAERGYSWYKGQPKTCFKCGSRTHMSGSCTQDRCFRCGEEGHLSPYCRKGIVCNLCGKRGHAFAQCPKAVHNSVAAQLTGVAGH.

A disordered region spans residues 1-158; sequence MATGGGAEEE…PLQDEPAAAA (158 aa). Basic and acidic residues-rich tracts occupy residues 26–38 and 47–65; these read ARGEEADGGREKM and LAEKKGEFREPRPPRREEE. The span at 67–79 shows a compositional bias: gly residues; sequence GGGGGSAGLGGPA. Positions 95–121 are enriched in basic and acidic residues; sequence GDPKGRRRDPAGEAVDPRKKKGAAEAG. Over residues 128–139 the composition is skewed to low complexity; sequence AAAAAMATPARP. Tyrosine 201 is modified (phosphotyrosine). CCHC-type zinc fingers lie at residues 335-350, 352-368, and 372-387; these read CFKCGSRTHMSGSCTQ, RCFRCGEEGHLSPYCRK, and CNLCGKRGHAFAQCPK.

As to quaternary structure, interacts with CGAS. Interacts with RIGI. Interacts with IFIH1/MDA5.

It localises to the cytoplasm. Its function is as follows. Nucleic acid-binding protein involved in innate immune response to DNA and RNA viruses. Binds DNA and RNA in the cytoplasm and acts by promoting recognition of viral nucleic acids by virus sensors, such as RIGI, IFIH1/MDA5 and CGAS. Acts as a co-sensor for recognition of double-stranded DNA (dsDNA) by cGAS in the cytoplasm, thereby playing a role in innate immune response to cytosolic dsDNA and DNA virus. Binds dsDNA and probably acts by promoting sensing of dsDNA by CGAS, leading to enhance CGAS oligomerization and activation. Promotes sensing of viral RNA by RIGI-like receptors proteins RIGI and IFIH1/MDA5 via two mechanisms: binds double-stranded RNA (dsRNA), enhancing the binding of RIGI and IFIH1/MDA5 to dsRNA and promotes 'Lys-63'-linked ubiquitination and subsequent activation of RIGI and IFIH1/MDA5. The polypeptide is Zinc finger CCHC domain-containing protein 3 (Homo sapiens (Human)).